A 668-amino-acid polypeptide reads, in one-letter code: Ubiquitin ligase complex F-box protein UFO1 (668 aa).

The F-box domain occupies glycine 5–leucine 51. Serine 511 carries the post-translational modification Phosphoserine. Threonine 514 is modified (phosphothreonine). UIM domains lie at aspartate 547 to glutamine 566, glutamate 583 to arginine 602, and asparagine 651 to asparagine 668. Over residues glutamate 564–asparagine 578 the composition is skewed to polar residues. Disordered regions lie at residues glutamate 564–aspartate 585 and aspartate 599–threonine 639.

In terms of assembly, interacts with SKP1. Component of the probable SCF(UFO1) complex containing CDC53, SKP1, RBX1 and UFO1.

It participates in protein modification; protein ubiquitination. Its function is as follows. Substrate recognition component of a SCF (SKP1-CUL1-F-box protein) E3 ubiquitin-protein ligase complex which mediates the ubiquitination and subsequent proteasomal degradation of target proteins. Probably recognizes and binds to phosphorylated target proteins. The protein is Ubiquitin ligase complex F-box protein UFO1 (UFO1) of Saccharomyces cerevisiae (strain ATCC 204508 / S288c) (Baker's yeast).